Consider the following 171-residue polypeptide: Interleukin-26 (171 aa).

An N-terminal signal peptide occupies residues 1-21 (MLVNFILRCGLLLVTLSLAIA).

It belongs to the IL-10 family. Homodimer. In terms of tissue distribution, expressed in HVS transformed T-cells but not other T-cell lines or primary stimulated T-cells. Expressed in colonic T-cells including Th17 inflammatory T-cells; the expression is significantly increased in serum of patients with Crohn's disease (at protein level).

The protein resides in the secreted. May play a role in local mechanisms of mucosal immunity and seems to have a pro-inflammatory function. May play a role in inflammatory bowel disease. Activates STAT1 and STAT3, MAPK1/3 (ERK1/2), JUN and AKT. Induces expression of SOCS3, TNF-alpha and IL-8, secretion of IL-8 and IL-10 and surface expression of ICAM1. Decreases proliferation of intestinal epithelial cells. Is inhibited by heparin. The chain is Interleukin-26 (IL26) from Homo sapiens (Human).